Consider the following 345-residue polypeptide: 4-hydroxy-3-methylbut-2-en-1-yl diphosphate synthase (flavodoxin) (345 aa).

Residues Cys271, Cys274, Cys306, and Glu313 each contribute to the [4Fe-4S] cluster site.

Belongs to the IspG family. Requires [4Fe-4S] cluster as cofactor.

The catalysed reaction is (2E)-4-hydroxy-3-methylbut-2-enyl diphosphate + oxidized [flavodoxin] + H2O + 2 H(+) = 2-C-methyl-D-erythritol 2,4-cyclic diphosphate + reduced [flavodoxin]. It functions in the pathway isoprenoid biosynthesis; isopentenyl diphosphate biosynthesis via DXP pathway; isopentenyl diphosphate from 1-deoxy-D-xylulose 5-phosphate: step 5/6. Converts 2C-methyl-D-erythritol 2,4-cyclodiphosphate (ME-2,4cPP) into 1-hydroxy-2-methyl-2-(E)-butenyl 4-diphosphate. The sequence is that of 4-hydroxy-3-methylbut-2-en-1-yl diphosphate synthase (flavodoxin) from Haemophilus influenzae (strain PittEE).